A 277-amino-acid polypeptide reads, in one-letter code: NH(3)-dependent NAD(+) synthetase (277 aa).

ATP is bound at residue 46–53 (GISGGQDS). Residue D52 coordinates Mg(2+). R142 is a binding site for deamido-NAD(+). T162 contributes to the ATP binding site. E167 serves as a coordination point for Mg(2+). K175 and D182 together coordinate deamido-NAD(+). Positions 191 and 213 each coordinate ATP. 263-264 (HK) contacts deamido-NAD(+).

The protein belongs to the NAD synthetase family. As to quaternary structure, homodimer.

It catalyses the reaction deamido-NAD(+) + NH4(+) + ATP = AMP + diphosphate + NAD(+) + H(+). Its pathway is cofactor biosynthesis; NAD(+) biosynthesis; NAD(+) from deamido-NAD(+) (ammonia route): step 1/1. Its function is as follows. Catalyzes the ATP-dependent amidation of deamido-NAD to form NAD. Uses ammonia as a nitrogen source. The sequence is that of NH(3)-dependent NAD(+) synthetase from Corynebacterium glutamicum (strain ATCC 13032 / DSM 20300 / JCM 1318 / BCRC 11384 / CCUG 27702 / LMG 3730 / NBRC 12168 / NCIMB 10025 / NRRL B-2784 / 534).